Reading from the N-terminus, the 407-residue chain is NAD(P)H-quinone oxidoreductase subunit 1 (407 aa).

The next 9 helical transmembrane spans lie at 28 to 48, 96 to 116, 127 to 147, 175 to 195, 203 to 223, 267 to 287, 309 to 329, 347 to 367, and 374 to 394; these read WLPL…IAAV, WLFT…YLVI, ITIG…GALM, LALS…VDIV, LFSF…IFLI, LILA…FIVP, ALVG…LAIL, WKFL…LVLL, and TLPL…AMSL.

The protein belongs to the complex I subunit 1 family. In terms of assembly, NDH-1 is composed of at least 11 different subunits.

It is found in the cell inner membrane. The catalysed reaction is a plastoquinone + NADH + (n+1) H(+)(in) = a plastoquinol + NAD(+) + n H(+)(out). It catalyses the reaction a plastoquinone + NADPH + (n+1) H(+)(in) = a plastoquinol + NADP(+) + n H(+)(out). Functionally, NDH-1 shuttles electrons from an unknown electron donor, via FMN and iron-sulfur (Fe-S) centers, to quinones in the respiratory and/or the photosynthetic chain. The immediate electron acceptor for the enzyme in this species is believed to be plastoquinone. Couples the redox reaction to proton translocation, and thus conserves the redox energy in a proton gradient. The sequence is that of NAD(P)H-quinone oxidoreductase subunit 1 from Gloeobacter violaceus (strain ATCC 29082 / PCC 7421).